Here is a 204-residue protein sequence, read N- to C-terminus: Cytochrome b6 (204 aa).

The helical transmembrane segment at 23 to 43 threads the bilayer; sequence YCLGGITLTSFLVQVATGSAM. Cys24 contributes to the heme c binding site. Heme b contacts are provided by His75 and His89. 3 helical membrane-spanning segments follow: residues 81–101, 107–127, and 136–157; these read MMVL…GFKK, WVTG…GYSL, and AVKI…LVEL. Heme b contacts are provided by His176 and His191. Residues 177 to 197 form a helical membrane-spanning segment; sequence TFILPLLTAVFMPMHFLMIRK.

This sequence belongs to the cytochrome b family. PetB subfamily. As to quaternary structure, the 4 large subunits of the cytochrome b6-f complex are cytochrome b6, subunit IV (17 kDa polypeptide, PetD), cytochrome f and the Rieske protein, while the 4 small subunits are PetG, PetL, PetM and PetN. The complex functions as a dimer. It depends on heme b as a cofactor. Heme c serves as cofactor.

It is found in the plastid. The protein resides in the chloroplast thylakoid membrane. In terms of biological role, component of the cytochrome b6-f complex, which mediates electron transfer between photosystem II (PSII) and photosystem I (PSI), cyclic electron flow around PSI, and state transitions. In Picea abies (Norway spruce), this protein is Cytochrome b6.